The sequence spans 741 residues: Catalase-peroxidase (741 aa).

The segment at residues 86 to 208 (WHSAGSYRIF…FAATEMGLIY (123 aa)) is a cross-link (tryptophyl-tyrosyl-methioninium (Trp-Tyr) (with M-234)). The active-site Proton acceptor is H87. A cross-link (tryptophyl-tyrosyl-methioninium (Tyr-Met) (with W-86)) is located at residues 208–234 (YVNPEGPGGNPDPLGSAQEIRVAFRRM). H249 is a heme b binding site.

The protein belongs to the peroxidase family. Peroxidase/catalase subfamily. Homodimer or homotetramer. Heme b serves as cofactor. In terms of processing, formation of the three residue Trp-Tyr-Met cross-link is important for the catalase, but not the peroxidase activity of the enzyme.

The catalysed reaction is H2O2 + AH2 = A + 2 H2O. The enzyme catalyses 2 H2O2 = O2 + 2 H2O. Bifunctional enzyme with both catalase and broad-spectrum peroxidase activity. Also displays NADH oxidase, INH lyase and isonicotinoyl-NAD synthase activities. This is Catalase-peroxidase from Archaeoglobus fulgidus (strain ATCC 49558 / DSM 4304 / JCM 9628 / NBRC 100126 / VC-16).